Here is a 1227-residue protein sequence, read N- to C-terminus: MPPLIESVVLQPLIAPIDPGFDGRRSRRIERRSFARIKDAIDLPLLIETQLKSFEWFKREGLRELFDEISPITDFTGKNLELHFREYTFGEPRYDEFECRDRDLTYAAPLRVKVELRILTTGEIKESEIFLGDFPMMTDNGTFVYNGAERVVVSQLIRSPGVYFKDEKDPTSGRALHTAKLIPNRGAWLEFETNKRDVISVKVDRKRKIPVTILLRAISAWIANEDGSGRWAPDNELDKYGHNEHLIELFRHVDTVAEHLYIQATIDKDPSHNAKEALLELYKRLRPGDPPTLENARTLIESLLFNPRRYDLAKVGRYKLNKNLWERDARRDGPKAPDLSVRVLLPRDIFRIVEQMILLNNGYGRPDDIDHLGNRRVRTVGELIQQQFRVGLLRLERVVKERMSLQDPASATPNGLINIRPVVAAMREFFGGSQLSQFMDQTNPLAELTNKRRLSALGPGGLSRDRAGFEVRDVHHSHYGRICPVETPEGPNIGLIGTMSTFARVNEMGFLETPYRKVYNSIDNAQVWREKGILLRDVRDLRTGDLIAAKGTRVDDQIARQITIGLLRGQILREDVVDPNTGELIAEAGTEINRALAERIVNLPMKQIKIRPVVSQEVDYLSADEEDRFVIVQANAPLDEHNRFLDTTVSCRFGEDFVTERVERVDYMDVSPKQVVSVSTSLIPFLEHDDANRALMGSNMQRQAVPLLRPDAPIVGTGMEYRTARDSGQVVVARRDGVVVSATGNRIIVEEDDGKRTEYRLRKFMRSNQDTCINQRPSVVRGQQVRAGDVIADSSSTDQGELALGQNVLVAYMPWEGGNFEDAILVSERLVREDIFTSIHIEKYEVEARDTKLGPEEITRDIPNVGQDSLRNLDERGIIYIGAEVQPNDILVGKITPKGETDLTAEERLLRAIFGEKAREVKDSSLRVPNGVRGKVIDVKVFSRSEGAELPVGVNQTVRVLLCQKRKISAGDKMAGRHGNKGVVSRVLPMEDMPFLPDGRPVDIILNPIGVPSRMNIGQILETHLGWAAARLGFRVATPVFDGAHEDQIKDLLVQAGLPADGKVTLYDGRTGEKFDHPVTVGYAYMLKLAHLVEDKIHARSTGPYSLVTQQPLGGKAQFGGQRFGEMEVWALEAYGAAYTLQEMLTVKSDDVVGRVKTYEAIVKGEPIQEAGVPESFKVLIKELQSLGLSVEVLSADEKPVELSDDLDSDIGALEGINLSGMERGEF.

It belongs to the RNA polymerase beta chain family. As to quaternary structure, the RNAP catalytic core consists of 2 alpha, 1 beta, 1 beta' and 1 omega subunit. When a sigma factor is associated with the core the holoenzyme is formed, which can initiate transcription.

It carries out the reaction RNA(n) + a ribonucleoside 5'-triphosphate = RNA(n+1) + diphosphate. DNA-dependent RNA polymerase catalyzes the transcription of DNA into RNA using the four ribonucleoside triphosphates as substrates. The polypeptide is DNA-directed RNA polymerase subunit beta (Chloroflexus aggregans (strain MD-66 / DSM 9485)).